Here is a 101-residue protein sequence, read N- to C-terminus: Small ribosomal subunit protein uS14 (101 aa).

Residues methionine 1–histidine 20 form a disordered region. The segment covering asparagine 10 to histidine 20 has biased composition (basic residues).

The protein belongs to the universal ribosomal protein uS14 family. In terms of assembly, part of the 30S ribosomal subunit. Contacts proteins S3 and S10.

Functionally, binds 16S rRNA, required for the assembly of 30S particles and may also be responsible for determining the conformation of the 16S rRNA at the A site. The sequence is that of Small ribosomal subunit protein uS14 from Sinorhizobium medicae (strain WSM419) (Ensifer medicae).